A 95-amino-acid polypeptide reads, in one-letter code: Large ribosomal subunit protein bL25 (95 aa).

It belongs to the bacterial ribosomal protein bL25 family. As to quaternary structure, part of the 50S ribosomal subunit; part of the 5S rRNA/L5/L18/L25 subcomplex. Contacts the 5S rRNA. Binds to the 5S rRNA independently of L5 and L18.

This is one of the proteins that binds to the 5S RNA in the ribosome where it forms part of the central protuberance. This Shewanella woodyi (strain ATCC 51908 / MS32) protein is Large ribosomal subunit protein bL25.